The following is a 321-amino-acid chain: MQELDLIIVGAGPVGLYAAFYAGMRGLSVAIIESAQVAGGQPQNLYPEKLIYDIAGLPAVTGADLTKNLLEQLAQISHRLFLGEGVQKIEKEDGIFSVITDKSNRKAKAVLLTTGAGLLKPRKLGIDNEENLANEGKISYFITSLKEFEGKNVAVFGGGDSALDWSLMLEKVAKEVHLVHRRTAFRGHEMTVDRVMDSGIQVHTPYTFSNFNENDLELKKVKAEENLNFSIDKILVNYGFLTNQVSLAENLEVSRNGRVKADSMMQSNIEGLYVAGDASDYAGKMPLMSVGFGEAVHAINAMTKNLEFNHPLRGGHSSSIF.

FAD contacts are provided by Glu33, Gln41, Tyr46, Val86, Leu119, Asp277, and Ser318.

It belongs to the ferredoxin--NADP reductase type 2 family. As to quaternary structure, homodimer. The cofactor is FAD.

The catalysed reaction is 2 reduced [2Fe-2S]-[ferredoxin] + NADP(+) + H(+) = 2 oxidized [2Fe-2S]-[ferredoxin] + NADPH. The protein is Ferredoxin--NADP reductase of Lactococcus lactis subsp. cremoris (strain MG1363).